The following is a 122-amino-acid chain: Beta-2-microglobulin (122 aa).

An N-terminal signal peptide occupies residues 1–22 (MMARIFILALLGQLCFLPYLDA). Residues 27-115 (PKVQVYSRHP…HLTLQEPKVV (89 aa)) form the Ig-like C1-type domain. The cysteines at positions 47 and 102 are disulfide-linked.

Belongs to the beta-2-microglobulin family. In terms of assembly, heterodimer of an alpha chain and a beta chain. Beta-2-microglobulin is the beta-chain of major histocompatibility complex class I molecules.

Its subcellular location is the secreted. Component of the class I major histocompatibility complex (MHC). Involved in the presentation of peptide antigens to the immune system. The chain is Beta-2-microglobulin (B2M) from Trichosurus vulpecula (Brush-tailed possum).